The chain runs to 102 residues: MFAIIELGAKQFKVSPDQVFVAEKTGNTVGSTVETKVLLLSDNNKVNIGSPALSGAKVTLKVLEDCKGEKIHGFKYKKRKNYKKSWGHRQQLQKLQVVSISG.

The protein belongs to the bacterial ribosomal protein bL21 family. In terms of assembly, part of the 50S ribosomal subunit. Contacts protein L20.

In terms of biological role, this protein binds to 23S rRNA in the presence of protein L20. The protein is Large ribosomal subunit protein bL21 of Leptospira biflexa serovar Patoc (strain Patoc 1 / Ames).